The chain runs to 258 residues: Protein SAWADEE HOMEODOMAIN HOMOLOG 1 (258 aa).

The tract at residues 138 to 244 (AWYDVSSFLT…LVRYELDNTE (107 aa)) is SAWADEE domain. 4 residues coordinate Zn(2+): cysteine 191, histidine 225, cysteine 230, and cysteine 232.

Associates with the RNA polymerase IV (Pol IV) complex. Interacts with NRPD1, NRPD2, NRPD3, NRPD3B, CLSY1 and CLSY2.

It localises to the nucleus. Its function is as follows. Involved in RNA-directed DNA methylation (RdDM). Required for the silencing of some endogenous RdDM targets and accumulation of 24-nt siRNAs, but not for the production of Pol V-dependent transcripts. Functions in transcriptional silencing through both DNA methylation-dependent and -independent pathways. Required for both maintenance and de-novo DNA methylation. Plays a role in the recruitment of Pol IV to genomic regions associated with K9 methylated histone H3 that are targets for RdDM. In Arabidopsis thaliana (Mouse-ear cress), this protein is Protein SAWADEE HOMEODOMAIN HOMOLOG 1 (SHH1).